The primary structure comprises 457 residues: Multidrug resistance protein MdtK (457 aa).

Helical transmembrane passes span 11 to 31, 53 to 73, 93 to 113, 127 to 147, 160 to 180, 191 to 211, 243 to 263, 276 to 296, 316 to 336, 350 to 370, 387 to 407, and 418 to 438; these read LLAL…MGFV, IWLP…PVVA, WLAG…GYII, AVGY…FQVA, GMVM…IFIY, VGCG…MLWW, LPIA…ALLV, IALN…AAVT, RTGV…TVLM, VVLL…SDSI, IFFI…YLLA, and PAGF…MMML.

This sequence belongs to the multi antimicrobial extrusion (MATE) (TC 2.A.66.1) family. MdtK subfamily.

It localises to the cell inner membrane. In terms of biological role, multidrug efflux pump that functions probably as a Na(+)/drug antiporter. The protein is Multidrug resistance protein MdtK of Klebsiella pneumoniae (strain 342).